Here is a 70-residue protein sequence, read N- to C-terminus: Cold shock-like protein CspI (70 aa).

The CSD domain maps to 7 to 67 (GLVKWFNPEK…GPKGPAAVHV (61 aa)).

The protein localises to the cytoplasm. The chain is Cold shock-like protein CspI (cspI) from Escherichia coli O6:H1 (strain CFT073 / ATCC 700928 / UPEC).